A 263-amino-acid polypeptide reads, in one-letter code: LOB domain-containing protein 41 (263 aa).

One can recognise an LOB domain in the interval 3 to 109 (MSCNGCRVLR…VEAVMKGEPV (107 aa)). Residues 162–204 (TVAIQAESEGKSDEASHDSSLSHQSEIVAAHEGESKESESNVS) are disordered. Basic and acidic residues-rich tracts occupy residues 169 to 178 (SEGKSDEASH) and 190 to 200 (AAHEGESKESE).

Belongs to the LOB domain-containing protein family. Expressed in young shoots, roots, stems, leaves and flowers.

This Arabidopsis thaliana (Mouse-ear cress) protein is LOB domain-containing protein 41 (LBD41).